We begin with the raw amino-acid sequence, 653 residues long: ATP-dependent zinc metalloprotease FtsH 1 (653 aa).

Topologically, residues 1 to 8 are cytoplasmic; the sequence is MAENKWLR. Residues 9–29 traverse the membrane as a helical segment; the sequence is NGFVWIVLIIAVVALWVTFMK. Topologically, residues 30–110 are extracellular; sequence DGGSAREENF…RVNPASQWGN (81 aa). A helical transmembrane segment spans residues 111-131; the sequence is WLSALTFILPTLFLIGIVIFM. At 132–653 the chain is on the cytoplasmic side; that stretch reads MRQAQGTNNQ…SPTMRPQPAS (522 aa). Position 203-210 (203-210) interacts with ATP; sequence GPPGTGKT. His425 contacts Zn(2+). Glu426 is an active-site residue. Positions 429 and 501 each coordinate Zn(2+). Residues 604–653 are disordered; sequence EPRPRPQLVGPPVTRPAALAHKTEEADRGGERSPHPQPHPSPTMRPQPAS. The span at 624–637 shows a compositional bias: basic and acidic residues; it reads HKTEEADRGGERSP. The span at 638–653 shows a compositional bias: pro residues; sequence HPQPHPSPTMRPQPAS.

In the central section; belongs to the AAA ATPase family. It in the C-terminal section; belongs to the peptidase M41 family. As to quaternary structure, homohexamer. The cofactor is Zn(2+).

It is found in the cell membrane. Acts as a processive, ATP-dependent zinc metallopeptidase for both cytoplasmic and membrane proteins. Plays a role in the quality control of integral membrane proteins. In Sphaerobacter thermophilus (strain ATCC 49802 / DSM 20745 / KCCM 41009 / NCIMB 13125 / S 6022), this protein is ATP-dependent zinc metalloprotease FtsH 1.